Consider the following 135-residue polypeptide: Small ribosomal subunit protein uS11 (135 aa).

Polar residues predominate over residues 1–10; the sequence is MPPKSRTATA. Disordered regions lie at residues 1–27 and 114–135; these read MPPK…HGHA and GAIQ…RRRV. A compositionally biased stretch (basic residues) spans 12-27; it reads RKPRRKEKKNVAHGHA.

Belongs to the universal ribosomal protein uS11 family. In terms of assembly, part of the 30S ribosomal subunit. Interacts with proteins S7 and S18. Binds to IF-3.

Functionally, located on the platform of the 30S subunit, it bridges several disparate RNA helices of the 16S rRNA. Forms part of the Shine-Dalgarno cleft in the 70S ribosome. The sequence is that of Small ribosomal subunit protein uS11 from Kineococcus radiotolerans (strain ATCC BAA-149 / DSM 14245 / SRS30216).